The chain runs to 146 residues: Nuclear export protein (146 aa).

Interacts with host HSC70.

The protein resides in the host cytoplasm. In terms of biological role, may mediate the nuclear export of encapsidated genomic RNAs (ribonucleoproteins, RNPs). Interaction of viral NEP with M1-Hsc70 is thought to promote nuclear export of the viral encapsidated genomes. This is Nuclear export protein from Infectious salmon anemia virus (isolate Atlantic salmon/Norway/810/9/99) (ISAV).